Reading from the N-terminus, the 176-residue chain is ATP-dependent protease subunit HslV (176 aa).

The active site involves threonine 2. Na(+)-binding residues include glycine 157, cysteine 160, and threonine 163.

Belongs to the peptidase T1B family. HslV subfamily. In terms of assembly, a double ring-shaped homohexamer of HslV is capped on each side by a ring-shaped HslU homohexamer. The assembly of the HslU/HslV complex is dependent on binding of ATP.

The protein localises to the cytoplasm. The catalysed reaction is ATP-dependent cleavage of peptide bonds with broad specificity.. Its activity is regulated as follows. Allosterically activated by HslU binding. Functionally, protease subunit of a proteasome-like degradation complex believed to be a general protein degrading machinery. In Erwinia tasmaniensis (strain DSM 17950 / CFBP 7177 / CIP 109463 / NCPPB 4357 / Et1/99), this protein is ATP-dependent protease subunit HslV.